Reading from the N-terminus, the 257-residue chain is Indole-3-glycerol phosphate synthase (257 aa).

The protein belongs to the TrpC family.

The catalysed reaction is 1-(2-carboxyphenylamino)-1-deoxy-D-ribulose 5-phosphate + H(+) = (1S,2R)-1-C-(indol-3-yl)glycerol 3-phosphate + CO2 + H2O. It functions in the pathway amino-acid biosynthesis; L-tryptophan biosynthesis; L-tryptophan from chorismate: step 4/5. The polypeptide is Indole-3-glycerol phosphate synthase (Phenylobacterium zucineum (strain HLK1)).